The chain runs to 376 residues: CCA-adding enzyme (376 aa).

The ATP site is built by Gly23 and Arg26. 2 residues coordinate CTP: Gly23 and Arg26. 2 residues coordinate Mg(2+): Glu36 and Asp38. 3 residues coordinate ATP: Arg106, Arg152, and Arg155. Residues Arg106, Arg152, and Arg155 each contribute to the CTP site.

The protein belongs to the tRNA nucleotidyltransferase/poly(A) polymerase family. Bacterial CCA-adding enzyme type 2 subfamily. Mg(2+) is required as a cofactor.

The enzyme catalyses a tRNA precursor + 2 CTP + ATP = a tRNA with a 3' CCA end + 3 diphosphate. The catalysed reaction is a tRNA with a 3' CCA end + 2 CTP + ATP = a tRNA with a 3' CCACCA end + 3 diphosphate. Functionally, catalyzes the addition and repair of the essential 3'-terminal CCA sequence in tRNAs without using a nucleic acid template. Adds these three nucleotides in the order of C, C, and A to the tRNA nucleotide-73, using CTP and ATP as substrates and producing inorganic pyrophosphate. tRNA 3'-terminal CCA addition is required both for tRNA processing and repair. Also involved in tRNA surveillance by mediating tandem CCA addition to generate a CCACCA at the 3' terminus of unstable tRNAs. While stable tRNAs receive only 3'-terminal CCA, unstable tRNAs are marked with CCACCA and rapidly degraded. This is CCA-adding enzyme from Coxiella burnetii (strain RSA 331 / Henzerling II).